An 891-amino-acid chain; its full sequence is Kinesin-like protein KIN-UB (891 aa).

The interval 1–54 is disordered; sequence MSGKVANATPKAAAGKPRLSAAGGGAYRRTSSGPLPSAGGGGGRASSESGVSSR. The segment covering 45-54 has biased composition (low complexity); that stretch reads ASSESGVSSR. One can recognise a Kinesin motor domain in the interval 54–400; sequence RVRVAVRLRP…IMFGQRAMKV (347 aa). 139–146 provides a ligand contact to ATP; that stretch reads GQTGTGKT. Residues 370 to 378 carry the D-BOX motif; that stretch reads RTSLVVTIG. A coiled-coil region spans residues 502 to 592; the sequence is TSSEVGEVQN…ADETRRSLDR (91 aa). A compositionally biased stretch (basic and acidic residues) spans 586 to 595; the sequence is TRRSLDRGDG. The disordered stretch occupies residues 586 to 626; it reads TRRSLDRGDGSGKIFPGFDSLMSHSRNSQPREQSNGPKPPI. A compositionally biased stretch (polar residues) spans 607–621; the sequence is MSHSRNSQPREQSNG. ARM repeat units lie at residues 623 to 662, 664 to 704, 706 to 746, and 748 to 787; these read KPPI…NLAA, EANQ…NLAM, ETNQ…NLCG, and DKLQ…NFAK.

Belongs to the TRAFAC class myosin-kinesin ATPase superfamily. Kinesin family. Ungrouped subfamily.

Its subcellular location is the cytoplasm. It localises to the cytoskeleton. The sequence is that of Kinesin-like protein KIN-UB from Oryza sativa subsp. japonica (Rice).